The primary structure comprises 188 residues: Anaphase-promoting complex subunit 10 (188 aa).

In terms of domain architecture, DOC spans 4–187 (NSNINSNSRL…SPEVSMFQTL (184 aa)).

It belongs to the APC10 family. In terms of assembly, the APC/C is composed of at least 13 subunits that stay tightly associated throughout the cell cycle: anapc1, anapc2, anapc3, anapc4, anapc5, anapc6, anapc7, anapc8, anapc10, anapc11, cdc20, cdc26 and cdh1.

It localises to the nucleus. It participates in protein modification; protein ubiquitination. Functionally, component of the anaphase promoting complex/cyclosome (APC/C), a cell cycle-regulated E3 ubiquitin-protein ligase complex that controls progression through mitosis and the G1 phase of the cell cycle. This is Anaphase-promoting complex subunit 10 (anapc10) from Dictyostelium discoideum (Social amoeba).